A 310-amino-acid chain; its full sequence is MPRTDNDSWDLATSVGATATMVAAARAIATNADNPLIADRFAEPLVRAVGVDFFTRWVTGDLVVADVDDTESGWQLAQMPDAMAVRARFFDAFFQDATRAGVRQAVILASGLDARAYRLDWPAGMTVFEIDQPEVIAFKTTTLAGLGAVPRADLRTVAVDLRQDWPKALTEAGFDAGRPTAWIAEGLFGYLPPEAQDRLLDNITALSATGSRLACEAIPNRPQQDAEKARELMRKATARWREHGFELEFGDLGYEGDRADVELYLQNLGWQSVGTQMSQLLADNGAAPIPHNNDSVTMADTIYYSSVLTA.

Residues D131 and 160–161 contribute to the S-adenosyl-L-methionine site; that span reads DL.

Belongs to the UPF0677 family.

Functionally, exhibits S-adenosyl-L-methionine-dependent methyltransferase activity. This is Putative S-adenosyl-L-methionine-dependent methyltransferase MUL_2766 from Mycobacterium ulcerans (strain Agy99).